We begin with the raw amino-acid sequence, 143 residues long: Large ribosomal subunit protein uL13 (143 aa).

This sequence belongs to the universal ribosomal protein uL13 family. Part of the 50S ribosomal subunit.

This protein is one of the early assembly proteins of the 50S ribosomal subunit, although it is not seen to bind rRNA by itself. It is important during the early stages of 50S assembly. In Prochlorococcus marinus subsp. pastoris (strain CCMP1986 / NIES-2087 / MED4), this protein is Large ribosomal subunit protein uL13.